The primary structure comprises 600 residues: Elongation factor 4 (600 aa).

A tr-type G domain is found at 5–187; it reads KYIRNFSIIA…AIINKLPAPK (183 aa). GTP-binding positions include 17 to 22 and 134 to 137; these read DHGKST and NKID.

Belongs to the TRAFAC class translation factor GTPase superfamily. Classic translation factor GTPase family. LepA subfamily.

Its subcellular location is the cell inner membrane. The catalysed reaction is GTP + H2O = GDP + phosphate + H(+). Required for accurate and efficient protein synthesis under certain stress conditions. May act as a fidelity factor of the translation reaction, by catalyzing a one-codon backward translocation of tRNAs on improperly translocated ribosomes. Back-translocation proceeds from a post-translocation (POST) complex to a pre-translocation (PRE) complex, thus giving elongation factor G a second chance to translocate the tRNAs correctly. Binds to ribosomes in a GTP-dependent manner. The polypeptide is Elongation factor 4 (Rickettsia prowazekii (strain Madrid E)).